The following is a 466-amino-acid chain: Oryzain beta chain (466 aa).

The N-terminal stretch at 1–21 (MAARAAAAAFLLLLIVGAATA) is a signal peptide. A propeptide spans 22-140 (APDMSIISYN…ERYRHDGVEE (119 aa)) (activation peptide). Disulfide bonds link Cys162–Cys205, Cys196–Cys238, and Cys296–Cys347. Residue Cys165 is part of the active site. Active-site residues include His302 and Asn322. Asn341 carries an N-linked (GlcNAc...) asparagine glycan. Residues 358–380 (KSGANPPKPSPTPPTPPTPPPPS) are disordered. Positions 362–466 (NPPKPSPTPP…KRTLAKLNTA (105 aa)) are cleaved as a propeptide — removed in mature form. Positions 363–380 (PPKPSPTPPTPPTPPPPS) are enriched in pro residues. Cystine bridges form between Cys386–Cys398 and Cys392–Cys413. An N-linked (GlcNAc...) asparagine glycan is attached at Asn389.

This sequence belongs to the peptidase C1 family. Expressed only in seeds.

In terms of biological role, probable thiol protease. In Oryza sativa subsp. japonica (Rice), this protein is Oryzain beta chain.